A 683-amino-acid polypeptide reads, in one-letter code: Protein zntD (683 aa).

3 consecutive transmembrane segments (helical) span residues 12–32, 42–62, and 79–99; these read IIST…PYWM, LSWS…LHLF, and PFAA…ELII. A compositionally biased stretch (basic residues) spans 120 to 129; that stretch reads VHLSHGHSHH. Disordered regions lie at residues 120-180, 299-325, 364-390, and 451-489; these read VHLS…TTTT, GFSN…NNNN, CSND…TPNT, and IGNS…NNNN. Gly residues predominate over residues 137–149; that stretch reads GNPGSGVGIGMGS. Composition is skewed to low complexity over residues 160 to 180 and 302 to 325; these read TTSP…TTTT and NNNN…NNNN. Residues 451–465 are compositionally biased toward low complexity; the sequence is IGNSGNIGSNNNNNN. Over residues 466–475 the composition is skewed to gly residues; it reads NGGGGGGGGN. Positions 476-489 are enriched in low complexity; the sequence is SNIDYNDNEENNNN. The next 5 helical transmembrane spans lie at 534–554, 564–584, 600–620, 631–651, and 662–682; these read ILLP…EGLA, VFDI…ALGI, FLLV…GMVI, PPIL…VEII, and ILIK…VAIW.

It belongs to the ZIP transporter (TC 2.A.5) family.

It localises to the membrane. In terms of biological role, may transport divalent cations. May participate, with dstA, in the regulation of the differentiation of stalk cells during development. The sequence is that of Protein zntD (zntD) from Dictyostelium discoideum (Social amoeba).